The chain runs to 254 residues: Alcohol dehydrogenase 2 (254 aa).

10-33 (FVAGLGGIGLDTSREIVKSGPKNL) lines the NAD(+) pocket. A substrate-binding site is contributed by Ser-138. Tyr-151 (proton acceptor) is an active-site residue.

The protein belongs to the short-chain dehydrogenases/reductases (SDR) family. As to quaternary structure, homodimer.

The catalysed reaction is a primary alcohol + NAD(+) = an aldehyde + NADH + H(+). It carries out the reaction a secondary alcohol + NAD(+) = a ketone + NADH + H(+). In Drosophila hydei (Fruit fly), this protein is Alcohol dehydrogenase 2 (Adh2).